The primary structure comprises 959 residues: Probable serine/threonine-protein kinase DDB_G0291664 (959 aa).

Residues 154–213 (QQQQQQQLTPPPSPPLLPIPQPPAQNEEQQLTQPPSIPPPQQKQIKIQKSDRGTQVKSIT) are disordered. Positions 162–176 (TPPPSPPLLPIPQPP) are enriched in pro residues. ANK repeat units follow at residues 294–324 (KGET…CMGI) and 333–362 (LNKN…PLKM). Residues 482–762 (IDFHTQIGSA…EVGIIETEFL (281 aa)) enclose the Protein kinase domain. ATP-binding positions include 488-496 (IGSAGNASV) and lysine 509. The active-site Proton acceptor is aspartate 610. Positions 904–959 (NNINNNNNNNNNCNNSKKFKTTSESTSALGSDASSSSSPSSSSPSPKYSASIYHHQ) are disordered.

It belongs to the protein kinase superfamily. Ser/Thr protein kinase family.

It catalyses the reaction L-seryl-[protein] + ATP = O-phospho-L-seryl-[protein] + ADP + H(+). The catalysed reaction is L-threonyl-[protein] + ATP = O-phospho-L-threonyl-[protein] + ADP + H(+). The polypeptide is Probable serine/threonine-protein kinase DDB_G0291664 (Dictyostelium discoideum (Social amoeba)).